The primary structure comprises 331 residues: UPF0324 membrane protein SACOL0411 (331 aa).

Helical transmembrane passes span 9–26, 31–48, 69–88, 93–115, 122–144, 154–176, 183–202, 217–234, 247–269, 273–295, and 308–330; these read FMIG…SFLA, ILDK…AILY, LLRF…DIIG, LLAI…NKLL, ALLL…APIF, SIGI…YAIF, YGAW…LAGG, LGRV…ILIM, ISIP…VTIP, LNIL…GLNV, and LMTI…HWLY.

Belongs to the UPF0324 family.

The protein resides in the cell membrane. In Staphylococcus aureus (strain COL), this protein is UPF0324 membrane protein SACOL0411.